The following is a 351-amino-acid chain: Methylthioribose-1-phosphate isomerase (351 aa).

Residues 51 to 53 (RGA), R94, and Q199 each bind substrate. D240 acts as the Proton donor in catalysis. 250 to 251 (NK) is a binding site for substrate.

The protein belongs to the EIF-2B alpha/beta/delta subunits family. MtnA subfamily. As to quaternary structure, homodimer.

The enzyme catalyses 5-(methylsulfanyl)-alpha-D-ribose 1-phosphate = 5-(methylsulfanyl)-D-ribulose 1-phosphate. Its pathway is amino-acid biosynthesis; L-methionine biosynthesis via salvage pathway; L-methionine from S-methyl-5-thio-alpha-D-ribose 1-phosphate: step 1/6. Functionally, catalyzes the interconversion of methylthioribose-1-phosphate (MTR-1-P) into methylthioribulose-1-phosphate (MTRu-1-P). The polypeptide is Methylthioribose-1-phosphate isomerase (Bacillus thuringiensis subsp. konkukian (strain 97-27)).